The chain runs to 403 residues: Tryptophan synthase beta chain (403 aa).

Position 96 is an N6-(pyridoxal phosphate)lysine (Lys96).

It belongs to the TrpB family. As to quaternary structure, tetramer of two alpha and two beta chains. It depends on pyridoxal 5'-phosphate as a cofactor.

The catalysed reaction is (1S,2R)-1-C-(indol-3-yl)glycerol 3-phosphate + L-serine = D-glyceraldehyde 3-phosphate + L-tryptophan + H2O. It participates in amino-acid biosynthesis; L-tryptophan biosynthesis; L-tryptophan from chorismate: step 5/5. Functionally, the beta subunit is responsible for the synthesis of L-tryptophan from indole and L-serine. This Ralstonia nicotianae (strain ATCC BAA-1114 / GMI1000) (Ralstonia solanacearum) protein is Tryptophan synthase beta chain.